Reading from the N-terminus, the 179-residue chain is Peptide deformylase (179 aa).

Residues cysteine 102 and histidine 144 each contribute to the Fe cation site. The active site involves glutamate 145. Histidine 148 provides a ligand contact to Fe cation.

It belongs to the polypeptide deformylase family. Fe(2+) serves as cofactor.

It catalyses the reaction N-terminal N-formyl-L-methionyl-[peptide] + H2O = N-terminal L-methionyl-[peptide] + formate. Removes the formyl group from the N-terminal Met of newly synthesized proteins. Requires at least a dipeptide for an efficient rate of reaction. N-terminal L-methionine is a prerequisite for activity but the enzyme has broad specificity at other positions. The sequence is that of Peptide deformylase from Wolbachia sp. subsp. Brugia malayi (strain TRS).